The primary structure comprises 117 residues: Large ribosomal subunit protein uL18 (117 aa).

The protein belongs to the universal ribosomal protein uL18 family. In terms of assembly, part of the 50S ribosomal subunit; part of the 5S rRNA/L5/L18/L25 subcomplex. Contacts the 5S and 23S rRNAs.

Its function is as follows. This is one of the proteins that bind and probably mediate the attachment of the 5S RNA into the large ribosomal subunit, where it forms part of the central protuberance. This is Large ribosomal subunit protein uL18 from Polynucleobacter necessarius subsp. necessarius (strain STIR1).